Here is a 102-residue protein sequence, read N- to C-terminus: Amoebiasin-1 (102 aa).

Positions 27-32 (NPTTGY) match the BC loop motif. Residues 51-61 (DQHAPGICGCG) carry the DE loop motif. The FG loop motif lies at 85 to 93 (PWAPNANDR).

The protein belongs to the protease inhibitor I42 family. As to quaternary structure, monomer. During oxidative conditions, forms homooligomers; disulfide-linked. Interacts with cysteine protease CP2. Interacts with cysteine protease CP5. During oxidative conditions, cys-39, cys-58 and cys-60 react to form intra- and inter-molecular disulfide bonds resulting in the loss of the protein inhibitory activity.

The protein resides in the cytoplasm. Functionally, cysteine protease inhibitor. Inhibits cysteine proteases CP1, CP2 and CP5. May protect the cytosol against cysteine proteases released by damaged intracellular vesicles. This Entamoeba histolytica (strain ATCC 30459 / HM-1:IMSS / ABRM) protein is Amoebiasin-1.